We begin with the raw amino-acid sequence, 530 residues long: Autoinducer-2 kinase (530 aa).

Belongs to the FGGY kinase family.

It localises to the cytoplasm. It carries out the reaction (S)-4,5-dihydroxypentane-2,3-dione + ATP = (2S)-2-hydroxy-3,4-dioxopentyl phosphate + ADP + H(+). Catalyzes the phosphorylation of autoinducer-2 (AI-2) to phospho-AI-2, which subsequently inactivates the transcriptional regulator LsrR and leads to the transcription of the lsr operon. Phosphorylates the ring-open form of (S)-4,5-dihydroxypentane-2,3-dione (DPD), which is the precursor to all AI-2 signaling molecules, at the C5 position. This Yersinia pseudotuberculosis serotype O:1b (strain IP 31758) protein is Autoinducer-2 kinase.